We begin with the raw amino-acid sequence, 299 residues long: Taste receptor type 2 member 50 (299 aa).

Residue Met-1 is a topological domain, extracellular. Residues 2–22 (IPFLHIFFSVLILVLFVLGNF) form a helical membrane-spanning segment. At 23 to 55 (ANGFIALVNFIDWVKRKKISLADQILTALAVSR) the chain is on the cytoplasmic side. The chain crosses the membrane as a helical span at residues 56–76 (VGLLWALLLNWYLTELNPAFY). The Extracellular segment spans residues 77–87 (SVELRITSYNA). The chain crosses the membrane as a helical span at residues 88–108 (WVVTNHFSMWLAASLSIFYLL). At 109-126 (KIANFSNLSFLNLKRRVR) the chain is on the cytoplasmic side. The helical transmembrane segment at 127–147 (SIILVILLGSLLFLVCHLLAV) threads the bilayer. Residues 148-181 (NMDENMWTEEYEGNMTGKMKLRNAAHLSYMTVTT) are Extracellular-facing. The N-linked (GlcNAc...) asparagine glycan is linked to Asn-161. Residues 182–202 (LWSFIPFMLSLISFLMLIFSL) traverse the membrane as a helical segment. Residues 203–229 (CKHLKKMQLHGEGSRDPSTTVHIKALQ) lie on the Cytoplasmic side of the membrane. Residues 230–250 (TLISFLLLCAIFFLFLIISVW) form a helical membrane-spanning segment. Residues 251 to 259 (SPRRLQNEP) lie on the Extracellular side of the membrane. The chain crosses the membrane as a helical span at residues 260 to 280 (VFMVCKAVGNIYLSFDSFVLI). Residues 281 to 299 (WRTKKLKHIFLLILCQIRC) are Cytoplasmic-facing.

It belongs to the G-protein coupled receptor T2R family.

The protein localises to the membrane. Its function is as follows. Receptor that may play a role in the perception of bitterness and is gustducin-linked. May play a role in sensing the chemical composition of the gastrointestinal content. The activity of this receptor may stimulate alpha gustducin, mediate PLC-beta-2 activation and lead to the gating of TRPM5. The protein is Taste receptor type 2 member 50 (TAS2R50) of Macaca mulatta (Rhesus macaque).